A 234-amino-acid polypeptide reads, in one-letter code: MSAITVGVVVFPGSNCDHDTAYALASFAGVKPVMLWHNNHDLQGAQAIVLPGGFSYGDYLRAGAIARFSPLMKEVVEFARKGYPVLGICNGFQVLLESGLLEGALSRNRDKKFLCCQTTITPVNCSTRFTEDYHQGEVLRIPIAHGEGNYFAPPEVLESLQEHNQIAFQYCNAQGEVTVEANPNGSLLNIAGIVNRAGNVLGLMPHPERASDAALGSVDGRLLFESLFRSLTGV.

Positions 6–234 (VGVVVFPGSN…ESLFRSLTGV (229 aa)) constitute a Glutamine amidotransferase type-1 domain. The active-site Nucleophile is Cys89. Catalysis depends on residues His206 and Glu208.

In terms of assembly, part of the FGAM synthase complex composed of 1 PurL, 1 PurQ and 2 PurS subunits.

It is found in the cytoplasm. It carries out the reaction N(2)-formyl-N(1)-(5-phospho-beta-D-ribosyl)glycinamide + L-glutamine + ATP + H2O = 2-formamido-N(1)-(5-O-phospho-beta-D-ribosyl)acetamidine + L-glutamate + ADP + phosphate + H(+). The catalysed reaction is L-glutamine + H2O = L-glutamate + NH4(+). It participates in purine metabolism; IMP biosynthesis via de novo pathway; 5-amino-1-(5-phospho-D-ribosyl)imidazole from N(2)-formyl-N(1)-(5-phospho-D-ribosyl)glycinamide: step 1/2. Its function is as follows. Part of the phosphoribosylformylglycinamidine synthase complex involved in the purines biosynthetic pathway. Catalyzes the ATP-dependent conversion of formylglycinamide ribonucleotide (FGAR) and glutamine to yield formylglycinamidine ribonucleotide (FGAM) and glutamate. The FGAM synthase complex is composed of three subunits. PurQ produces an ammonia molecule by converting glutamine to glutamate. PurL transfers the ammonia molecule to FGAR to form FGAM in an ATP-dependent manner. PurS interacts with PurQ and PurL and is thought to assist in the transfer of the ammonia molecule from PurQ to PurL. The protein is Phosphoribosylformylglycinamidine synthase subunit PurQ of Chlorobium chlorochromatii (strain CaD3).